Reading from the N-terminus, the 62-residue chain is Omega-lycotoxin-Am1e (62 aa).

Residues 1–15 (EDEVEETLPVAEEGR) constitute a propeptide that is removed on maturation. Intrachain disulfides connect Cys19-Cys34, Cys26-Cys39, Cys33-Cys59, and Cys41-Cys57.

This sequence belongs to the neurotoxin omega-lctx family. In terms of tissue distribution, expressed by the venom gland.

Its subcellular location is the secreted. Modulates Cav2.1/CACNA1A voltage-gated calcium channels (P/Q-type currents) in rat cerebellar Purkinje cells and hippocampal CA1-CA3 neurons. At saturating concentrations (&gt;10 nM) decelerates activation kinetics and slightly increases peak amplitude without affecting deactivation kinetics. In vivo, does not cause death when intravenously injected into mice. In rat models, through its activity on Cav2.1/CACNA1A, has an ameliorative effect on memory defects provoked by hyperstimulation of N-methyl-D-aspartate receptors (NMDARs) in the hippocampus. This is Omega-lycotoxin-Am1e from Alopecosa marikovskyi (Wolf spider).